A 258-amino-acid chain; its full sequence is Thiazole synthase (258 aa).

Lys-100 serves as the catalytic Schiff-base intermediate with DXP. Residues Gly-161, 187–188 (AG), and 209–210 (NT) each bind 1-deoxy-D-xylulose 5-phosphate.

Belongs to the ThiG family. As to quaternary structure, homotetramer. Forms heterodimers with either ThiH or ThiS.

It localises to the cytoplasm. The enzyme catalyses [ThiS sulfur-carrier protein]-C-terminal-Gly-aminoethanethioate + 2-iminoacetate + 1-deoxy-D-xylulose 5-phosphate = [ThiS sulfur-carrier protein]-C-terminal Gly-Gly + 2-[(2R,5Z)-2-carboxy-4-methylthiazol-5(2H)-ylidene]ethyl phosphate + 2 H2O + H(+). The protein operates within cofactor biosynthesis; thiamine diphosphate biosynthesis. Functionally, catalyzes the rearrangement of 1-deoxy-D-xylulose 5-phosphate (DXP) to produce the thiazole phosphate moiety of thiamine. Sulfur is provided by the thiocarboxylate moiety of the carrier protein ThiS. In vitro, sulfur can be provided by H(2)S. This is Thiazole synthase from Campylobacter jejuni subsp. doylei (strain ATCC BAA-1458 / RM4099 / 269.97).